A 287-amino-acid chain; its full sequence is Large ribosomal subunit protein uL2 (287 aa).

The disordered stretch occupies residues 221–287 (RGSVMNPCDH…SKRSRGGRDS (67 aa)). Residues 271–287 (LRKRRKTSKRSRGGRDS) show a composition bias toward basic residues.

The protein belongs to the universal ribosomal protein uL2 family. Part of the 50S ribosomal subunit. Forms a bridge to the 30S subunit in the 70S ribosome.

In terms of biological role, one of the primary rRNA binding proteins. Required for association of the 30S and 50S subunits to form the 70S ribosome, for tRNA binding and peptide bond formation. It has been suggested to have peptidyltransferase activity; this is somewhat controversial. Makes several contacts with the 16S rRNA in the 70S ribosome. The sequence is that of Large ribosomal subunit protein uL2 from Synechococcus sp. (strain CC9605).